Consider the following 394-residue polypeptide: Ceramide glucosyltransferase-B (394 aa).

Residues 1–10 (MAVLDLALQG) lie on the Lumenal side of the membrane. A helical membrane pass occupies residues 11–32 (LAIFGCILFFVLWFMHFLSIVY). Topologically, residues 33–195 (TRLHLNKKVS…QVYFGTSHPR (163 aa)) are cytoplasmic. Residue Asp92 is a short sequence motif, D1. Residue Asp144 is a short sequence motif, D2. A helical transmembrane segment spans residues 196–215 (SYISANVTGIKCVTGMSCLM). At 216–287 (RKEVLDQAGG…KLRINMLPAT (72 aa)) the chain is on the lumenal side. Residue Asp236 is a short sequence motif, D3. Asp236 functions as the Proton acceptor in the catalytic mechanism. The short motif at 272–276 (RMIRW) is the (Q/R)XXRW element. Residues 288 to 304 (IICEPISECFVASLIIG) traverse the membrane as a helical segment. At 305 to 309 (WAAHH) the chain is on the cytoplasmic side. The helical transmembrane segment at 310–328 (IFRWDIMVFFMCHCLAWFI) threads the bilayer. Residues 329–348 (FDYIQLRGVQGGPLNFSKLD) are Lumenal-facing. Residues 349–369 (YAVAWFIRESMTIYIFLSALW) form a helical membrane-spanning segment. Residues 370-394 (DPTISWRTGRYRLRCGGTAEEILDV) lie on the Cytoplasmic side of the membrane.

The protein belongs to the glycosyltransferase 2 family.

The protein resides in the golgi apparatus membrane. The enzyme catalyses an N-acylsphing-4-enine + UDP-alpha-D-glucose = a beta-D-glucosyl-(1&lt;-&gt;1')-N-acylsphing-4-enine + UDP + H(+). It catalyses the reaction UDP-alpha-D-xylose + an N-acylsphing-4-enine = a beta-D-xylosyl-(1&lt;-&gt;1')-N-acylsphing-4-enine + UDP + H(+). The catalysed reaction is N-(9Z-octadecenoyl)-sphing-4-enine + UDP-alpha-D-xylose = beta-D-xylosyl-(1&lt;-&gt;1')-N-(9Z-octadecenoyl)-sphing-4-enine + UDP + H(+). It participates in lipid metabolism; sphingolipid metabolism. In terms of biological role, participates in the initial step of the glucosylceramide-based glycosphingolipid/GSL synthetic pathway at the cytosolic surface of the Golgi. Catalyzes the transfer of glucose from UDP-glucose to ceramide to produce glucosylceramide/GlcCer (such as beta-D-glucosyl-(1&lt;-&gt;1')-N-acylsphing-4-enine). Glucosylceramide is the core component of glycosphingolipids/GSLs, amphipathic molecules consisting of a ceramide lipid moiety embedded in the outer leaflet of the membrane, linked to one of hundreds of different externally oriented oligosaccharide structures. Glycosphingolipids are essential components of membrane microdomains that mediate membrane trafficking and signal transduction. They are implicated in many fundamental cellular processes, including growth, differentiation, migration, morphogenesis, cell-to-cell and cell-to-matrix interactions. Catalyzes the synthesis of xylosylceramide/XylCer (such as beta-D-xylosyl-(1&lt;-&gt;1')-N-acylsphing-4-enine) using UDP-Xyl as xylose donor. This is Ceramide glucosyltransferase-B (ugcg-b) from Xenopus laevis (African clawed frog).